We begin with the raw amino-acid sequence, 706 residues long: Ribosomal RNA large subunit methyltransferase K/L (706 aa).

Residues 43-154 (LLYQSLLWSR…RDMASVALDL (112 aa)) form the THUMP domain.

This sequence belongs to the methyltransferase superfamily. RlmKL family.

It is found in the cytoplasm. It carries out the reaction guanosine(2445) in 23S rRNA + S-adenosyl-L-methionine = N(2)-methylguanosine(2445) in 23S rRNA + S-adenosyl-L-homocysteine + H(+). It catalyses the reaction guanosine(2069) in 23S rRNA + S-adenosyl-L-methionine = N(2)-methylguanosine(2069) in 23S rRNA + S-adenosyl-L-homocysteine + H(+). Functionally, specifically methylates the guanine in position 2445 (m2G2445) and the guanine in position 2069 (m7G2069) of 23S rRNA. The polypeptide is Ribosomal RNA large subunit methyltransferase K/L (Serratia proteamaculans (strain 568)).